The sequence spans 631 residues: Probable potassium transport system protein Kup (631 aa).

12 helical membrane passes run 17–37 (IGLLIAAVGVVYGDIGTSPLY), 56–76 (ILGVLSLIFWSLIWVVSFKYM), 109–129 (MMMVVFGLFGAALFYGDSMIT), 147–167 (GLDHWIVPMALVVLVGLFLIQ), 174–194 (IGVLFGPVMVVWFLVLGALGV), 215–235 (FFIIHPGIGVAILGAVVLALT), 256–276 (WFILVLPALLLNYFGQGALVL), 288–308 (LLAPSWALLPLIGLSTMATII), 346–366 (IYIGAVNWALMVGVIMLVIGF), 378–398 (VAVTGTMLCTTILVSTVMLML), 403–423 (PLLAVPLLICLLLVDGLFFAA), and 428–448 (IFQGGAFPVLAGAVLFILMTT).

This sequence belongs to the HAK/KUP transporter (TC 2.A.72) family.

It is found in the cell inner membrane. The enzyme catalyses K(+)(in) + H(+)(in) = K(+)(out) + H(+)(out). In terms of biological role, transport of potassium into the cell. Likely operates as a K(+):H(+) symporter. The chain is Probable potassium transport system protein Kup from Pseudomonas syringae pv. tomato (strain ATCC BAA-871 / DC3000).